The following is a 548-amino-acid chain: Chaperonin GroEL (548 aa).

Residues 30 to 33, K51, 87 to 91, G415, and D495 each bind ATP; these read TLGP and DGTTT.

This sequence belongs to the chaperonin (HSP60) family. As to quaternary structure, forms a cylinder of 14 subunits composed of two heptameric rings stacked back-to-back. Interacts with the co-chaperonin GroES.

It localises to the cytoplasm. The enzyme catalyses ATP + H2O + a folded polypeptide = ADP + phosphate + an unfolded polypeptide.. Together with its co-chaperonin GroES, plays an essential role in assisting protein folding. The GroEL-GroES system forms a nano-cage that allows encapsulation of the non-native substrate proteins and provides a physical environment optimized to promote and accelerate protein folding. This chain is Chaperonin GroEL, found in Yersinia pseudotuberculosis serotype O:1b (strain IP 31758).